A 462-amino-acid polypeptide reads, in one-letter code: Kinetochore protein Nuf2-B (462 aa).

Residues 143–462 are a coiled coil; the sequence is SGYKSALENV…AELNRRLSRQ (320 aa). The segment at 236-259 is disordered; the sequence is EQERMKSQIVESPEQRKSKTERMK. Positions 248–259 are enriched in basic and acidic residues; that stretch reads PEQRKSKTERMK.

It belongs to the NUF2 family. As to quaternary structure, component of the NDC80 complex, which is composed of ndc80, cdca1, spbc24 and spbc25. The NDC80 complex interacts with mis12 and zwint.

Its subcellular location is the nucleus. The protein localises to the chromosome. The protein resides in the centromere. It localises to the kinetochore. Acts as a component of the essential kinetochore-associated NDC80 complex, which is required for chromosome segregation and spindle checkpoint activity. Required for kinetochore integrity and the organization of stable microtubule binding sites in the outer plate of the kinetochore. The NDC80 complex synergistically enhances the affinity of the SKA1 complex for microtubules and may allow the NDC80 complex to track depolymerizing microtubules. The sequence is that of Kinetochore protein Nuf2-B (nuf2-b) from Xenopus laevis (African clawed frog).